A 178-amino-acid polypeptide reads, in one-letter code: tRNA (cytidine(56)-2'-O)-methyltransferase (178 aa).

Residues Leu84, 112–116, and 130–137 contribute to the S-adenosyl-L-methionine site; these read GAEKV and VGNQPHSE.

This sequence belongs to the aTrm56 family. In terms of assembly, homodimer.

Its subcellular location is the cytoplasm. It catalyses the reaction cytidine(56) in tRNA + S-adenosyl-L-methionine = 2'-O-methylcytidine(56) in tRNA + S-adenosyl-L-homocysteine + H(+). In terms of biological role, specifically catalyzes the AdoMet-dependent 2'-O-ribose methylation of cytidine at position 56 in tRNAs. The chain is tRNA (cytidine(56)-2'-O)-methyltransferase from Methanocella arvoryzae (strain DSM 22066 / NBRC 105507 / MRE50).